Reading from the N-terminus, the 312-residue chain is tRNA (adenine(58)-N(1))-methyltransferase catalytic subunit trmt61a (312 aa).

Residues Leu85, 112–114 (SGS), Glu133, Arg138, 161–162 (DA), and Asp183 each bind S-adenosyl-L-methionine.

Belongs to the class I-like SAM-binding methyltransferase superfamily. TRM61 family. As to quaternary structure, heterotetramer; composed of two copies of trmt6 and two copies of trmt61a.

The protein localises to the nucleus. It catalyses the reaction adenosine(58) in tRNA + S-adenosyl-L-methionine = N(1)-methyladenosine(58) in tRNA + S-adenosyl-L-homocysteine + H(+). Its activity is regulated as follows. Inhibited by calcium and magnesium ions and spermidine. Enhanced by KCl, NaCl and NH(4)Cl in concentrations from 0.1-0.25 M. Concentrations of more than 0.3 M are inhibitory. Catalytic subunit of tRNA (adenine-N(1)-)-methyltransferase, which catalyzes the formation of N(1)-methyladenine at position 58 (m1A58) in initiator methionyl-tRNA. This chain is tRNA (adenine(58)-N(1))-methyltransferase catalytic subunit trmt61a (trmt61a), found in Dictyostelium discoideum (Social amoeba).